A 92-amino-acid chain; its full sequence is Protein canopy homolog 1 (92 aa).

It belongs to the canopy family.

The sequence is that of Protein canopy homolog 1 (CNPY1) from Homo sapiens (Human).